A 144-amino-acid polypeptide reads, in one-letter code: uncharacterized protein (144 aa).

The stretch at 48–119 (ELNKLKAKAD…KETEEPKMEL (72 aa)) forms a coiled coil.

This is an uncharacterized protein from Archaeoglobus fulgidus (strain ATCC 49558 / DSM 4304 / JCM 9628 / NBRC 100126 / VC-16).